The chain runs to 346 residues: Cyclin-dependent kinase 20 (346 aa).

The Protein kinase domain maps to 4–288 (YCILGRIGEG…ASKALLHQYF (285 aa)). ATP-binding positions include 10–18 (IGEGAHGIV) and K33. D127 acts as the Proton acceptor in catalysis.

The protein belongs to the protein kinase superfamily. CMGC Ser/Thr protein kinase family. CDC2/CDKX subfamily. In terms of assembly, monomer. Interacts with TBC1D32. Interacts with MAK.

It is found in the nucleus. The protein localises to the cytoplasm. The protein resides in the cell projection. It localises to the cilium. It catalyses the reaction L-seryl-[protein] + ATP = O-phospho-L-seryl-[protein] + ADP + H(+). It carries out the reaction L-threonyl-[protein] + ATP = O-phospho-L-threonyl-[protein] + ADP + H(+). Its function is as follows. Required for high-level Shh responses in the developing neural tube. Together with TBC1D32, controls the structure of the primary cilium by coordinating assembly of the ciliary membrane and axoneme, allowing GLI2 to be properly activated in response to SHH signaling. Involved in cell growth. Activates CDK2, a kinase involved in the control of the cell cycle, by phosphorylating residue 'Thr-160'. The chain is Cyclin-dependent kinase 20 (CDK20) from Homo sapiens (Human).